A 428-amino-acid polypeptide reads, in one-letter code: MDTIYALASARGKAGVAVLRLSGPRSHEAVQAFGVLLPPLRHAALRRLTWNDEVLDEALVLLFGAGASFTGETSAELHLHGSPAAVSSVLRVLSGLPGLRAAEAGEFTRRALENGRLDLAQVEGLADLIDAETEAQRRQAMRVFSGAIGERAERWRADLIRAAALLEATIDFADEDVPVDVTPEVLTLIDGLLADLRREVDGSRIAERIRDGFEVAIVGAPNAGKSTLLNALARREAAITSEIAGTTRDVIEVRMDLDGLPVTFLDTAGLRDTSDLVESLGIERAVTRAKAADLRVFLLDDSGPLPGITVQADDLVVQGKADLRPGHGLRLSGRTGEGVPELVAAIGERLLGRTAGAGSLTRERHRLAIERAIGAMESVRAELLRGQQHTELAADDLRRAIRSLDSLVGRVDVESLLGEIFASFCIGK.

Positions 20, 76, and 116 each coordinate (6S)-5-formyl-5,6,7,8-tetrahydrofolate. The region spanning 212–351 (GFEVAIVGAP…LVAAIGERLL (140 aa)) is the TrmE-type G domain. A K(+)-binding site is contributed by N222. Residues 222 to 227 (NAGKST), 241 to 247 (SEIAGTT), and 266 to 269 (DTAG) each bind GTP. Residue S226 coordinates Mg(2+). Residues S241, I243, and T246 each contribute to the K(+) site. Mg(2+) is bound at residue T247. Position 428 (K428) interacts with (6S)-5-formyl-5,6,7,8-tetrahydrofolate.

This sequence belongs to the TRAFAC class TrmE-Era-EngA-EngB-Septin-like GTPase superfamily. TrmE GTPase family. In terms of assembly, homodimer. Heterotetramer of two MnmE and two MnmG subunits. K(+) is required as a cofactor.

The protein resides in the cytoplasm. Its function is as follows. Exhibits a very high intrinsic GTPase hydrolysis rate. Involved in the addition of a carboxymethylaminomethyl (cmnm) group at the wobble position (U34) of certain tRNAs, forming tRNA-cmnm(5)s(2)U34. In Cereibacter sphaeroides (strain ATCC 17029 / ATH 2.4.9) (Rhodobacter sphaeroides), this protein is tRNA modification GTPase MnmE.